The following is a 432-amino-acid chain: Ornithine aminotransferase, mitochondrial (432 aa).

K287 carries the N6-(pyridoxal phosphate)lysine modification.

Belongs to the class-III pyridoxal-phosphate-dependent aminotransferase family. As to quaternary structure, homotetramer. Requires pyridoxal 5'-phosphate as cofactor.

Its subcellular location is the mitochondrion matrix. It carries out the reaction a 2-oxocarboxylate + L-ornithine = L-glutamate 5-semialdehyde + an L-alpha-amino acid. The protein operates within amino-acid biosynthesis; L-proline biosynthesis; L-glutamate 5-semialdehyde from L-ornithine: step 1/1. This is Ornithine aminotransferase, mitochondrial (Oat) from Drosophila ananassae (Fruit fly).